A 156-amino-acid chain; its full sequence is Small ribosomal subunit protein uS7 (156 aa).

This sequence belongs to the universal ribosomal protein uS7 family. Part of the 30S ribosomal subunit. Contacts proteins S9 and S11.

In terms of biological role, one of the primary rRNA binding proteins, it binds directly to 16S rRNA where it nucleates assembly of the head domain of the 30S subunit. Is located at the subunit interface close to the decoding center, probably blocks exit of the E-site tRNA. This Wigglesworthia glossinidia brevipalpis protein is Small ribosomal subunit protein uS7.